The sequence spans 594 residues: UvrABC system protein C (594 aa).

In terms of domain architecture, GIY-YIG spans 14-91 (DQPGCYLMKD…IKKYDPKYNI (78 aa)). Positions 196-231 (KEVRSELEIKMYEASEKLEFERAKELRDQIAHIDAI) constitute a UVR domain.

This sequence belongs to the UvrC family. In terms of assembly, interacts with UvrB in an incision complex.

Its subcellular location is the cytoplasm. Functionally, the UvrABC repair system catalyzes the recognition and processing of DNA lesions. UvrC both incises the 5' and 3' sides of the lesion. The N-terminal half is responsible for the 3' incision and the C-terminal half is responsible for the 5' incision. The polypeptide is UvrABC system protein C (Bacillus cereus (strain G9842)).